The chain runs to 494 residues: Glutamyl-tRNA(Gln) amidotransferase subunit A (494 aa).

Active-site charge relay system residues include K72 and S147. S171 functions as the Acyl-ester intermediate in the catalytic mechanism.

This sequence belongs to the amidase family. GatA subfamily. In terms of assembly, heterotrimer of A, B and C subunits.

The enzyme catalyses L-glutamyl-tRNA(Gln) + L-glutamine + ATP + H2O = L-glutaminyl-tRNA(Gln) + L-glutamate + ADP + phosphate + H(+). In terms of biological role, allows the formation of correctly charged Gln-tRNA(Gln) through the transamidation of misacylated Glu-tRNA(Gln) in organisms which lack glutaminyl-tRNA synthetase. The reaction takes place in the presence of glutamine and ATP through an activated gamma-phospho-Glu-tRNA(Gln). This Methylacidiphilum infernorum (isolate V4) (Methylokorus infernorum (strain V4)) protein is Glutamyl-tRNA(Gln) amidotransferase subunit A.